The chain runs to 224 residues: Cytidylate kinase (224 aa).

11–19 is a binding site for ATP; it reads GPAAAGKST.

It belongs to the cytidylate kinase family. Type 1 subfamily.

Its subcellular location is the cytoplasm. The catalysed reaction is CMP + ATP = CDP + ADP. The enzyme catalyses dCMP + ATP = dCDP + ADP. The sequence is that of Cytidylate kinase (cmk) from Bacillus subtilis (strain 168).